We begin with the raw amino-acid sequence, 316 residues long: Transaldolase (316 aa).

The active-site Schiff-base intermediate with substrate is the Lys-132.

The protein belongs to the transaldolase family. Type 1 subfamily. As to quaternary structure, homodimer.

Its subcellular location is the cytoplasm. It carries out the reaction D-sedoheptulose 7-phosphate + D-glyceraldehyde 3-phosphate = D-erythrose 4-phosphate + beta-D-fructose 6-phosphate. It participates in carbohydrate degradation; pentose phosphate pathway; D-glyceraldehyde 3-phosphate and beta-D-fructose 6-phosphate from D-ribose 5-phosphate and D-xylulose 5-phosphate (non-oxidative stage): step 2/3. Functionally, transaldolase is important for the balance of metabolites in the pentose-phosphate pathway. The polypeptide is Transaldolase (Aeromonas salmonicida (strain A449)).